A 732-amino-acid polypeptide reads, in one-letter code: Catalase-peroxidase (732 aa).

The tryptophyl-tyrosyl-methioninium (Trp-Tyr) (with M-246) cross-link spans 97–220 (WHSAGTYRTS…LAAVQMGLIY (124 aa)). His98 (proton acceptor) is an active-site residue. Residues 220–246 (YVNPEGPDGNPDPVAAGRDIRETFARM) constitute a cross-link (tryptophyl-tyrosyl-methioninium (Tyr-Met) (with W-97)). His261 serves as a coordination point for heme b.

It belongs to the peroxidase family. Peroxidase/catalase subfamily. In terms of assembly, homodimer or homotetramer. Requires heme b as cofactor. Post-translationally, formation of the three residue Trp-Tyr-Met cross-link is important for the catalase, but not the peroxidase activity of the enzyme.

The catalysed reaction is H2O2 + AH2 = A + 2 H2O. It catalyses the reaction 2 H2O2 = O2 + 2 H2O. Bifunctional enzyme with both catalase and broad-spectrum peroxidase activity. This is Catalase-peroxidase from Chlorobium phaeobacteroides (strain DSM 266 / SMG 266 / 2430).